The primary structure comprises 213 residues: MNNSHADVGLVIAVKRLTAAKTRLAPMFSARTREDVVLAMLVDTITAAIAVPALRSVLVVTPDEDAADAARQLGALVLPDPTPQGHHDPLNNALTAAEVVARRENTNVVALQGDLPALRTVELAEAIGAARAHARSFVTDRHGTGTSALFSFGAPLDPHFGLDSAQRHRRSGAVELTGDWPGLRSDIDTPDDVLALNDLGVGPATARAIARAQ.

3 residues coordinate phosphoenolpyruvate: T146, G161, and S164.

It belongs to the CofC family.

It carries out the reaction phosphoenolpyruvate + GTP + H(+) = enolpyruvoyl-2-diphospho-5'-guanosine + diphosphate. Its pathway is cofactor biosynthesis; coenzyme F420 biosynthesis. Its function is as follows. Guanylyltransferase that catalyzes the activation of phosphoenolpyruvate (PEP) as enolpyruvoyl-2-diphospho-5'-guanosine, via the condensation of PEP with GTP. It is involved in the biosynthesis of coenzyme F420, a hydride carrier cofactor. The protein is Phosphoenolpyruvate guanylyltransferase of Mycolicibacterium vanbaalenii (strain DSM 7251 / JCM 13017 / BCRC 16820 / KCTC 9966 / NRRL B-24157 / PYR-1) (Mycobacterium vanbaalenii).